A 101-amino-acid polypeptide reads, in one-letter code: uncharacterized protein (101 aa).

The signal sequence occupies residues Met1 to Ala25. A lipid anchor (N-palmitoyl cysteine) is attached at Cys26. Cys26 carries S-diacylglycerol cysteine lipidation.

It belongs to the MG439/MG440 family.

Its subcellular location is the cell membrane. This is an uncharacterized protein from Mycoplasma pneumoniae (strain ATCC 29342 / M129 / Subtype 1) (Mycoplasmoides pneumoniae).